The chain runs to 282 residues: MIYETAPAKINFTLDTLFKRDDGYHEIEMVMTTVDLNDRLSFEKRTDNKIVVDIEHNYVPNDNKNLAYKAADLMFERFNINEGVTISIDKDIPVSAGLAGGSADAAATMRGLNRLFGLGQSLDALAALGIQIGTDIPFCIYNQTAVCTGRGEQVTFLKRPPSAWVVLAKPNIGISSPDVFKALDLTEEHIVHNEKCKQALENNDYHLLCNSLSNRLEPVSMAMHPDIKKIKDNMLQCGADGALMSGSGPTVYGLAQKERQAKNIYNAVNGCCNEVYLVRLLG.

Lys9 is a catalytic residue. 93 to 103 (PVSAGLAGGSA) contacts ATP. The active site involves Asp135.

The protein belongs to the GHMP kinase family. IspE subfamily.

The catalysed reaction is 4-CDP-2-C-methyl-D-erythritol + ATP = 4-CDP-2-C-methyl-D-erythritol 2-phosphate + ADP + H(+). In terms of biological role, catalyzes the phosphorylation of the position 2 hydroxy group of 4-diphosphocytidyl-2C-methyl-D-erythritol. This is Putative 4-diphosphocytidyl-2-C-methyl-D-erythritol kinase (ispE) from Staphylococcus epidermidis (strain ATCC 35984 / DSM 28319 / BCRC 17069 / CCUG 31568 / BM 3577 / RP62A).